Reading from the N-terminus, the 369-residue chain is Phenylalanine--tRNA ligase alpha subunit (369 aa).

Position 269 (glutamate 269) interacts with Mg(2+).

It belongs to the class-II aminoacyl-tRNA synthetase family. Phe-tRNA synthetase alpha subunit type 1 subfamily. Tetramer of two alpha and two beta subunits. Requires Mg(2+) as cofactor.

The protein resides in the cytoplasm. It catalyses the reaction tRNA(Phe) + L-phenylalanine + ATP = L-phenylalanyl-tRNA(Phe) + AMP + diphosphate + H(+). This Brucella ovis (strain ATCC 25840 / 63/290 / NCTC 10512) protein is Phenylalanine--tRNA ligase alpha subunit.